A 556-amino-acid polypeptide reads, in one-letter code: Riboflavin biosynthesis protein RibBA (556 aa).

Residues 1–202 are DHBP synthase; that stretch reads MFDAIDAALA…IADLISYRLQ (202 aa). D-ribulose 5-phosphate-binding positions include 26-27, Asp31, 141-145, and Glu165; these read RE and RAGHT. Glu27 provides a ligand contact to Mg(2+). His144 contributes to the Mg(2+) binding site. The GTP cyclohydrolase II stretch occupies residues 203–402; that stretch reads HDRFVQRETI…AEKLGHWLVK (200 aa). 255-259 contributes to the GTP binding site; sequence RMHSE. Residues Cys260, Cys271, and Cys273 each coordinate Zn(2+). Residues Gln276, 298-300, and Thr320 each bind GTP; that span reads EGR. The Proton acceptor; for GTP cyclohydrolase activity role is filled by Asp332. The active-site Nucleophile; for GTP cyclohydrolase activity is Arg334. Residues Thr355 and Lys360 each coordinate GTP. Positions 403-556 are unknown; it reads NYLLAIAIKF…KQGSGEMTNR (154 aa).

The protein in the N-terminal section; belongs to the DHBP synthase family. This sequence in the central section; belongs to the GTP cyclohydrolase II family. The cofactor is Mg(2+). Requires Mn(2+) as cofactor. It depends on Zn(2+) as a cofactor.

The enzyme catalyses D-ribulose 5-phosphate = (2S)-2-hydroxy-3-oxobutyl phosphate + formate + H(+). It catalyses the reaction GTP + 4 H2O = 2,5-diamino-6-hydroxy-4-(5-phosphoribosylamino)-pyrimidine + formate + 2 phosphate + 3 H(+). It functions in the pathway cofactor biosynthesis; riboflavin biosynthesis; 2-hydroxy-3-oxobutyl phosphate from D-ribulose 5-phosphate: step 1/1. The protein operates within cofactor biosynthesis; riboflavin biosynthesis; 5-amino-6-(D-ribitylamino)uracil from GTP: step 1/4. Functionally, catalyzes the conversion of D-ribulose 5-phosphate to formate and 3,4-dihydroxy-2-butanone 4-phosphate. Its function is as follows. Catalyzes the conversion of GTP to 2,5-diamino-6-ribosylamino-4(3H)-pyrimidinone 5'-phosphate (DARP), formate and pyrophosphate. The protein is Riboflavin biosynthesis protein RibBA (ribBA) of Synechocystis sp. (strain ATCC 27184 / PCC 6803 / Kazusa).